Reading from the N-terminus, the 121-residue chain is Small ribosomal subunit protein uS13 (121 aa).

The segment at 99–121 (GQRTRTNARTRRGARKTVAGKKK) is disordered. Basic residues predominate over residues 100–121 (QRTRTNARTRRGARKTVAGKKK).

The protein belongs to the universal ribosomal protein uS13 family. Part of the 30S ribosomal subunit. Forms a loose heterodimer with protein S19. Forms two bridges to the 50S subunit in the 70S ribosome.

Its function is as follows. Located at the top of the head of the 30S subunit, it contacts several helices of the 16S rRNA. In the 70S ribosome it contacts the 23S rRNA (bridge B1a) and protein L5 of the 50S subunit (bridge B1b), connecting the 2 subunits; these bridges are implicated in subunit movement. Contacts the tRNAs in the A and P-sites. In Synechococcus sp. (strain RCC307), this protein is Small ribosomal subunit protein uS13.